Reading from the N-terminus, the 292-residue chain is uncharacterized protein (292 aa).

Disordered stretches follow at residues 29-50 (SEKP…LRDS) and 166-292 (VKRK…EELK). S50 carries the post-translational modification Phosphoserine. Polar residues-rich tracts occupy residues 176–189 (NSKN…PVNN) and 208–217 (GSPTNFSKLI). A compositionally biased stretch (basic and acidic residues) spans 221-239 (YKDEWLQQQKADSDRRTPK). 2 stretches are compositionally biased toward polar residues: residues 240 to 250 (TSEASVSTQST) and 260 to 270 (DTETPQNSETP).

In terms of processing, phosphorylated upon DNA damage.

This is an uncharacterized protein from Rattus norvegicus (Rat).